Here is a 231-residue protein sequence, read N- to C-terminus: Dephospho-CoA kinase domain-containing protein (231 aa).

The region spanning 3–207 is the DPCK domain; that stretch reads LVGLTGGIAS…HSLEYLPLRL (205 aa). 8–15 lines the ATP pocket; the sequence is GGIASGKS.

Belongs to the CoaE family.

The polypeptide is Dephospho-CoA kinase domain-containing protein (DCAKD) (Bos taurus (Bovine)).